Reading from the N-terminus, the 190-residue chain is Potassium-transporting ATPase KdpC subunit (190 aa).

The chain crosses the membrane as a helical span at residues 10-30 (TFIFLLLITGGVYPLLTTVLG).

It belongs to the KdpC family. The system is composed of three essential subunits: KdpA, KdpB and KdpC.

The protein resides in the cell inner membrane. Its function is as follows. Part of the high-affinity ATP-driven potassium transport (or Kdp) system, which catalyzes the hydrolysis of ATP coupled with the electrogenic transport of potassium into the cytoplasm. This subunit acts as a catalytic chaperone that increases the ATP-binding affinity of the ATP-hydrolyzing subunit KdpB by the formation of a transient KdpB/KdpC/ATP ternary complex. The sequence is that of Potassium-transporting ATPase KdpC subunit from Escherichia coli (strain SE11).